Consider the following 1502-residue polypeptide: E3 ubiquitin-protein ligase UPL4 (1502 aa).

Over residues 1–21 the composition is skewed to basic and acidic residues; it reads MENRGQKRMEVVEELPADKRA. The segment at 1–107 is disordered; that stretch reads MENRGQKRME…DYQRQRSSGD (107 aa). Over residues 22-46 the composition is skewed to polar residues; the sequence is CNSQDFRPSTSGSSVQAQANDTNPG. Over residues 67–90 the composition is skewed to acidic residues; it reads DEEEQEEQDKEDSDYGSCDSDEED. Residues 91-107 are compositionally biased toward basic and acidic residues; the sequence is PRQRVLQDYQRQRSSGD. 4 ARM repeats span residues 143–183, 186–226, 228–265, and 267–306; these read EESL…YLCD, PPSV…KISR, EPVA…NICK, and LSSE…KIAD. The interval 833–881 is disordered; sequence CQAESSSPMEIDSESSDASQLQGSQVEDQTQLPGQQNASSSETSSEKED. Polar residues predominate over residues 849 to 875; the sequence is DASQLQGSQVEDQTQLPGQQNASSSET. The tract at residues 1022-1096 is K-box; sequence RPVPHSEFVS…IRHHPQHLSS (75 aa). One can recognise an HECT domain in the interval 1128–1502; sequence KMMELYGNQK…TEGQGSFHLS (375 aa). Residue Cys-1469 is the Glycyl thioester intermediate of the active site.

This sequence belongs to the UPL family. K-HECT subfamily.

The catalysed reaction is S-ubiquitinyl-[E2 ubiquitin-conjugating enzyme]-L-cysteine + [acceptor protein]-L-lysine = [E2 ubiquitin-conjugating enzyme]-L-cysteine + N(6)-ubiquitinyl-[acceptor protein]-L-lysine.. Its pathway is protein modification; protein ubiquitination. Probable E3 ubiquitin-protein ligase which mediates ubiquitination and subsequent proteasomal degradation of target proteins. In Arabidopsis thaliana (Mouse-ear cress), this protein is E3 ubiquitin-protein ligase UPL4 (UPL4).